The chain runs to 1713 residues: Serine/threonine-protein kinase MRCK beta (1713 aa).

In terms of domain architecture, Protein kinase spans 76–342 (FEIIKVIGRG…IEDFKKHAFF (267 aa)). ATP is bound by residues 82 to 90 (IGRGAFGEV) and Lys-105. Asp-200 acts as the Proton acceptor in catalysis. Phosphoserine; by autocatalysis is present on residues Ser-221 and Ser-233. Position 239 is a phosphothreonine; by autocatalysis (Thr-239). The AGC-kinase C-terminal domain occupies 343-413 (EGLNWENIRN…TTESCFSDRG (71 aa)). Thr-423 carries the phosphothreonine modification. A coiled-coil region spans residues 434-649 (LENSLQIEAY…ASKERKLREH (216 aa)). Omega-N-methylarginine is present on Arg-671. 2 coiled-coil regions span residues 681-815 (QEIS…AHWE) and 878-939 (ELQS…FRAD). At Ser-927 the chain carries Phosphoserine. Tyr-954 is modified (phosphotyrosine). Residues 971-994 (ASDQETQASKMDLSPSVSVATSTE) show a composition bias toward polar residues. Positions 971 to 1022 (ASDQETQASKMDLSPSVSVATSTEQQEDMARPQQRPSPVPLPSTQALAMAGP) are disordered. The segment at 1026–1076 (AHQFSIKSFPSPTQCSHCTSLMVGLIRQGYACEVCAFSCHVSCKDSAPQVC) adopts a Phorbol-ester/DAG-type zinc-finger fold. The 120-residue stretch at 1096–1215 (GTAYKGYVKV…WVGILEGLQA (120 aa)) folds into the PH domain. Residues 1241-1515 (IKAVLAAAIV…RPLNSDGSLN (275 aa)) form the CNH domain. The CRIB domain occupies 1585-1598 (ISNPTNFNHVAHMG). The disordered stretch occupies residues 1616-1713 (TVQEEKQGPT…EGLDQPSCDA (98 aa)). Basic and acidic residues predominate over residues 1666–1677 (DFDKEPDSDSTK). Ser-1682, Ser-1684, Ser-1688, Ser-1692, and Ser-1695 each carry phosphoserine.

It belongs to the protein kinase superfamily. AGC Ser/Thr protein kinase family. DMPK subfamily. Homodimer and homotetramer via the coiled coil regions. Interacts tightly with GTP-bound but not GDP-bound CDC42. Interacts with TJP1; this interaction requires the presence of catalytically active CDC42. Forms a tripartite complex with MYO18A and LURAP1 with the latter acting as an adapter connecting CDC42BPB and MYO18A. LURAP1 binding results in activation of CDC42BPB by abolition of its negative autoregulation. Interacts with STRIP1, STRN3 and SIKE1. Interacts with CPNE4 (via VWFA domain). Interacts with LURAP1. Interacts (via AGC-kinase C-terminal domain) with FAM89B/LRAP25 (via LRR repeat). Forms a tripartite complex with FAM89B/LRAP25 and LIMK1. The cofactor is Mg(2+). Post-translationally, proteolytically cleaved by caspases upon apoptosis induction.

It is found in the cytoplasm. Its subcellular location is the cell membrane. It localises to the cell junction. The protein localises to the cell projection. The protein resides in the lamellipodium. It catalyses the reaction L-seryl-[protein] + ATP = O-phospho-L-seryl-[protein] + ADP + H(+). The enzyme catalyses L-threonyl-[protein] + ATP = O-phospho-L-threonyl-[protein] + ADP + H(+). Maintained in an inactive, closed conformation by an interaction between the kinase domain and the negative autoregulatory C-terminal coiled-coil region. Agonist binding to the phorbol ester binding site disrupts this, releasing the kinase domain to allow N-terminus-mediated dimerization and kinase activation by transautophosphorylation. Inhibited by chelerythrine chloride. In terms of biological role, serine/threonine-protein kinase which is an important downstream effector of CDC42 and plays a role in the regulation of cytoskeleton reorganization and cell migration. Regulates actin cytoskeletal reorganization via phosphorylation of PPP1R12C and MYL9/MLC2. In concert with MYO18A and LURAP1, is involved in modulating lamellar actomyosin retrograde flow that is crucial to cell protrusion and migration. Phosphorylates PPP1R12A. In concert with FAM89B/LRAP25 mediates the targeting of LIMK1 to the lamellipodium resulting in its activation and subsequent phosphorylation of CFL1 which is important for lamellipodial F-actin regulation. In Mus musculus (Mouse), this protein is Serine/threonine-protein kinase MRCK beta.